The sequence spans 329 residues: Sideroflexin-1.1 (329 aa).

The next 5 membrane-spanning stretches (helical) occupy residues 100-122, 150-167, 178-198, 232-254, and 274-294; these read MPGN…GVVF, LFVS…VALG, LAAR…NIPM, VTLS…MNRI, and IQTL…CALF.

This sequence belongs to the sideroflexin family.

It is found in the mitochondrion inner membrane. It catalyses the reaction L-serine(in) = L-serine(out). The enzyme catalyses L-alanine(in) = L-alanine(out). It carries out the reaction L-cysteine(in) = L-cysteine(out). Functionally, amino acid transporter importing serine, an essential substrate of the mitochondrial branch of the one-carbon pathway, into mitochondria. Mitochondrial serine is then converted to glycine and formate, which exits to the cytosol where it is used to generate the charged folates that serve as one-carbon donors. May also transport other amino acids including alanine and cysteine. In Caenorhabditis elegans, this protein is Sideroflexin-1.1.